Reading from the N-terminus, the 165-residue chain is Protein C2-DOMAIN ABA-RELATED 8 (165 aa).

Residue methionine 1 is modified to N-acetylmethionine. One can recognise a C2 domain in the interval 1-106 (MENLVGLLRI…QGTDIQELTN (106 aa)). Ca(2+)-binding residues include arginine 21, aspartate 22, aspartate 27, aspartate 73, lysine 74, aspartate 75, and aspartate 81.

This sequence belongs to the plant CAR protein family. Binds to PYR/PYL/RCAR abscisic acid intracellular receptors in an ABA-independent manner, both at the plasma membrane and in the nucleus.

It is found in the cell membrane. The protein localises to the nucleus. Functionally, stimulates the GTPase/ATPase activities of Obg-like ATPases. Mediates the transient calcium-dependent interaction of PYR/PYL/RCAR abscisic acid (ABA) receptors with the plasma membrane and thus regulates ABA sensitivity. This Arabidopsis thaliana (Mouse-ear cress) protein is Protein C2-DOMAIN ABA-RELATED 8.